The sequence spans 448 residues: Methylenetetrahydrofolate--tRNA-(uracil-5-)-methyltransferase TrmFO (448 aa).

Glycine 13–glycine 18 is a binding site for FAD.

Belongs to the MnmG family. TrmFO subfamily. FAD serves as cofactor.

It is found in the cytoplasm. The enzyme catalyses uridine(54) in tRNA + (6R)-5,10-methylene-5,6,7,8-tetrahydrofolate + NADH + H(+) = 5-methyluridine(54) in tRNA + (6S)-5,6,7,8-tetrahydrofolate + NAD(+). It carries out the reaction uridine(54) in tRNA + (6R)-5,10-methylene-5,6,7,8-tetrahydrofolate + NADPH + H(+) = 5-methyluridine(54) in tRNA + (6S)-5,6,7,8-tetrahydrofolate + NADP(+). Catalyzes the folate-dependent formation of 5-methyl-uridine at position 54 (M-5-U54) in all tRNAs. The polypeptide is Methylenetetrahydrofolate--tRNA-(uracil-5-)-methyltransferase TrmFO (Streptococcus pyogenes serotype M1).